The primary structure comprises 416 residues: ORC1-type DNA replication protein 9 (416 aa).

Residues 79 to 83 (SGKSL), Y226, and R238 contribute to the ATP site.

The protein belongs to the CDC6/cdc18 family.

Its function is as follows. Involved in regulation of DNA replication. This Haloarcula marismortui (strain ATCC 43049 / DSM 3752 / JCM 8966 / VKM B-1809) (Halobacterium marismortui) protein is ORC1-type DNA replication protein 9 (cdc6i).